Reading from the N-terminus, the 349-residue chain is MNEKKHFTLQELALLTDCKLVGNPSQIIKSVADLENASEEDASFFANNRYLQSLKESQAGVVFVDLQTPLIEGKNYLLSENPSRSFQHLIDTLYPQKKHPSGFTGIHTSAVIHPTAEIGNKVTICPQAVIDEGVKIGSGSFIGAGVYIGSYSEIGEDCTIHPRVVIREKCYLGNRVILQPGVVIGSCGFGYTTNQQGQHIKLNQVGNVWVENDVEIGANTTIDRARFKSTRIGQGTKIDNLVQIAHGVTIGSYNIIVSQTGIAGSTTTGKYVVIAGQAAIAGHLHLKDHVVVAGKSGVTKSLNTGKYSGIPAMPIKDYNRNQVFLRKIEIYINQIKNLEKRVLELESQN.

His-246 serves as the catalytic Proton acceptor.

The protein belongs to the transferase hexapeptide repeat family. LpxD subfamily. As to quaternary structure, homotrimer.

The enzyme catalyses a UDP-3-O-[(3R)-3-hydroxyacyl]-alpha-D-glucosamine + a (3R)-hydroxyacyl-[ACP] = a UDP-2-N,3-O-bis[(3R)-3-hydroxyacyl]-alpha-D-glucosamine + holo-[ACP] + H(+). The protein operates within bacterial outer membrane biogenesis; LPS lipid A biosynthesis. Catalyzes the N-acylation of UDP-3-O-acylglucosamine using 3-hydroxyacyl-ACP as the acyl donor. Is involved in the biosynthesis of lipid A, a phosphorylated glycolipid that anchors the lipopolysaccharide to the outer membrane of the cell. This is UDP-3-O-acylglucosamine N-acyltransferase from Protochlamydia amoebophila (strain UWE25).